Reading from the N-terminus, the 131-residue chain is Phosphoribosyl-AMP cyclohydrolase (131 aa).

Residue Asp80 participates in Mg(2+) binding. Cys81 contributes to the Zn(2+) binding site. 2 residues coordinate Mg(2+): Asp82 and Asp84. Residues Cys98 and Cys105 each contribute to the Zn(2+) site.

Belongs to the PRA-CH family. Homodimer. It depends on Mg(2+) as a cofactor. Requires Zn(2+) as cofactor.

It is found in the cytoplasm. The catalysed reaction is 1-(5-phospho-beta-D-ribosyl)-5'-AMP + H2O = 1-(5-phospho-beta-D-ribosyl)-5-[(5-phospho-beta-D-ribosylamino)methylideneamino]imidazole-4-carboxamide. It participates in amino-acid biosynthesis; L-histidine biosynthesis; L-histidine from 5-phospho-alpha-D-ribose 1-diphosphate: step 3/9. Functionally, catalyzes the hydrolysis of the adenine ring of phosphoribosyl-AMP. The polypeptide is Phosphoribosyl-AMP cyclohydrolase (Azoarcus sp. (strain BH72)).